Reading from the N-terminus, the 144-residue chain is 3-dehydroquinate dehydratase (144 aa).

Tyr24 serves as the catalytic Proton acceptor. Substrate contacts are provided by Asn73, His79, and Asp86. The active-site Proton donor is His99. Residues 100-101 (LS) and Arg110 each bind substrate.

The protein belongs to the type-II 3-dehydroquinase family. Homododecamer.

The enzyme catalyses 3-dehydroquinate = 3-dehydroshikimate + H2O. Its pathway is metabolic intermediate biosynthesis; chorismate biosynthesis; chorismate from D-erythrose 4-phosphate and phosphoenolpyruvate: step 3/7. Its function is as follows. Catalyzes a trans-dehydration via an enolate intermediate. The protein is 3-dehydroquinate dehydratase of Shewanella putrefaciens (strain CN-32 / ATCC BAA-453).